Consider the following 88-residue polypeptide: CLAVATA3/ESR (CLE)-related protein 42 (88 aa).

An N-terminal signal peptide occupies residues 1–24 (MRSPHITISLVFLFFLFLIIQTHQ). A disordered region spans residues 69–88 (KMIGANEHGVPSGPNPISNR). Hydroxyproline is present on residues Pro79 and Pro82. O-linked (Ara...) hydroxyproline glycosylation is present at Pro82.

This sequence belongs to the CLV3/ESR signal peptide family. Post-translationally, the O-glycosylation (arabinosylation) of the hydroxyproline Pro-82 enhances binding affinity of the CLE42p peptide for its receptor. Expressed at low levels in seedlings, roots and inflorescence.

It is found in the secreted. It localises to the extracellular space. Its function is as follows. Extracellular signal peptide that regulates cell fate. Represses tracheary element differentiation but promotes the formation of procambial cells. The protein is CLAVATA3/ESR (CLE)-related protein 42 of Arabidopsis thaliana (Mouse-ear cress).